The sequence spans 3010 residues: Genome polyprotein (3010 aa).

S2 carries the post-translational modification N-acetylserine; by host. Residues 2–23 (STNGKPQRKTKRNTNRRPQDVK) form an interaction with STAT1 region. Residues 2–58 (STNGKPQRKTKRNTNRRPQDVKFPGGGQIVGGVYLLPRRGPRLGVRATRKTWERSQP) form an interaction with EIF2AK2/PKR region. Positions 2-59 (STNGKPQRKTKRNTNRRPQDVKFPGGGQIVGGVYLLPRRGPRLGVRATRKTWERSQPR) are interaction with DDX3X. The segment at 2 to 75 (STNGKPQRKT…PKARQPEGRA (74 aa)) is disordered. Over 2-168 (STNGKPQRKT…EDGVNYATGN (167 aa)) the chain is Cytoplasmic. 4 short sequence motifs (nuclear localization signal) span residues 5 to 13 (GKPQRKTKR), 38 to 43 (PRRGPR), 58 to 64 (PRGRRQP), and 66 to 71 (PKARQP). Basic residues predominate over residues 7–16 (PQRKTKRNTN). S99 carries the phosphoserine; by host modification. Positions 112–152 (PRRRSRNLGKVIDTLTCGFADLMGYIPLVGAPLGGVARALA) are important for endoplasmic reticulum and mitochondrial localization. Phosphoserine; by host PKA is present on S116. The interaction with APOA2 stretch occupies residues 122–173 (VIDTLTCGFADLMGYIPLVGAPLGGVARALAHGVRVLEDGVNYATGNLPGCS). Residues 164-167 (YATG) form an important for lipid droplets localization region. The chain crosses the membrane as a helical span at residues 169–189 (LPGCSFSIFLLALLSCLTIPA). A propeptide spans 178 to 191 (LLALLSCLTIPASA) (ER anchor for the core protein, removed in mature form by host signal peptidase). The Lumenal portion of the chain corresponds to 190-358 (SAYEVHNVSG…GGAHWGVLAG (169 aa)). N196, N209, N234, and N250 each carry an N-linked (GlcNAc...) asparagine; by host glycan. The interval 265-296 (LVGAAAFCSAMYVGDLCGSVFLVSQLFTFSPR) is important for fusion. An N-linked (GlcNAc...) asparagine; by host glycan is attached at N305. The helical transmembrane segment at 359–379 (LAYYSMVGNWAKVLIVMLLFA) threads the bilayer. Residues 380-725 (GVDGSTIVSG…WEYILLLFLL (346 aa)) are Lumenal-facing. The interval 385–411 (TIVSGGTVARTTHSLASLFTQGASQKI) is HVR1. Residues N417, N423, N430, and N448 are each glycosylated (N-linked (GlcNAc...) (high mannose) asparagine; by host). Cystine bridges form between C429-C552, C452-C459, C486-C494, and C503-C508. An HVR2 region spans residues 474 to 479 (YTEADI). Residues 480-493 (QDQRPYCWHYAPRP) form a CD81-binding 1 region. The N-linked (GlcNAc...) (high mannose) asparagine; by host glycan is linked to N532. An N-linked (GlcNAc...) asparagine; by host glycan is attached at N540. Residues 544-551 (PPQGNWFG) are CD81-binding 2. The N-linked (GlcNAc...) (high mannose) asparagine; by host glycan is linked to N556. A disulfide bridge connects residues C564 and C569. An N-linked (GlcNAc...) (high mannose) asparagine; by host glycan is attached at N576. Disulfide bonds link C581–C585, C597–C620, and C607–C644. 2 N-linked (GlcNAc...) (high mannose) asparagine; by host glycosylation sites follow: N623 and N645. The cysteines at positions 652 and 677 are disulfide-linked. The tract at residues 660–671 (SELSPLLLSTTE) is PKR/eIF2-alpha phosphorylation homology domain (PePHD). Residues 726–746 (LADARVCACLWMMLLIAQAEA) form a helical membrane-spanning segment. Over 747–757 (ALENLVVFNAA) the chain is Lumenal. A helical transmembrane segment spans residues 758 to 778 (SVAGMHGTLSFLVFFCAAWYI). Residues 779 to 781 (KGR) lie on the Cytoplasmic side of the membrane. The chain crosses the membrane as a helical span at residues 782 to 803 (LVPGAAYALYGVWPLLLLLLAL). Over 804-813 (PPRAYAMDRE) the chain is Lumenal. Residues 814–834 (MAASCGGAVFVGLVLLTLSPH) form a helical membrane-spanning segment. At 835 to 838 (YKMF) the chain is on the cytoplasmic side. Residues 839-859 (LARLIWWLQYFITRAEAHLQV) traverse the membrane as a helical segment. At 860–881 (WIPPLNVRGGRDAIILLTCAAY) the chain is on the lumenal side. The helical transmembrane segment at 882–902 (PELIFDITKILLAILGPLMVL) threads the bilayer. The region spanning 903-1026 (QAGLTRIPYF…SLEGRGWRLL (124 aa)) is the Peptidase C18 domain. Over 903 to 1657 (QAGLTRIPYF…CMSADLEVVT (755 aa)) the chain is Cytoplasmic. A protease NS2-3 region spans residues 904–1206 (AGLTRIPYFV…PVESMETTMR (303 aa)). A lipid anchor (S-palmitoyl cysteine; by host) is attached at C922. An interaction with host SCPS1 region spans residues 929–949 (AGGHYVQMALMKLAALTGTYV). Active-site for protease NS2 activity; shared with dimeric partner residues include H952, E972, and C993. The 182-residue stretch at 1027 to 1208 (APITAYAQQT…ESMETTMRSP (182 aa)) folds into the Peptidase S29 domain. Active-site charge relay system; for serine protease NS3 activity residues include H1083 and D1107. 2 residues coordinate Zn(2+): C1123 and C1125. The active-site Charge relay system; for serine protease NS3 activity is S1165. Residues C1171 and H1175 each coordinate Zn(2+). One can recognise a Helicase ATP-binding domain in the interval 1217 to 1369 (PAVPQAFQVA…PNIEEIALSN (153 aa)). An ATP-binding site is contributed by 1230-1237 (APTGSGKS). Mg(2+)-binding residues include S1237 and E1317. A DECH box motif is present at residues 1316-1319 (DECH). The interval 1486–1497 (QRRGRTSRGRRG) is RNA-binding. The chain crosses the membrane as a helical span at residues 1658-1678 (STWVLVGGVLAALAAYCLTTG). The tract at residues 1679 to 1690 (SVVIVGRIILSG) is NS3-binding. At 1679–1805 (SVVIVGRIIL…SITSPLTTQS (127 aa)) the chain is on the cytoplasmic side. A helical membrane pass occupies residues 1806–1824 (TLLFNILGGWVAAQLAPPG). Residues 1825-1828 (AASA) lie on the Lumenal side of the membrane. The chain crosses the membrane as a helical span at residues 1829 to 1849 (FVGAGIAGAAVGSIGLGKVLV). Position 1850 (D1850) is a topological domain, cytoplasmic. A helical transmembrane segment spans residues 1851–1871 (MVAGYGAGVAGALVAFKVMSG). The Lumenal portion of the chain corresponds to 1872–1881 (EMPSTEDLVN). A helical transmembrane segment spans residues 1882–1902 (LLPAILSPGALVVGVVCAAIL). Over 1903 to 1972 (RRHVDPGEGA…WINEDCSTPC (70 aa)) the chain is Cytoplasmic. Residues C1968 and C1972 are each lipidated (S-palmitoyl cysteine; by host). An intramembrane segment occupies 1973 to 2002 (SGSWLRDVWDWICTVLADFKTWLQSKLLPR). Over 2003 to 2989 (LPGVPFFSCQ…YHSLSRARPR (987 aa)) the chain is Cytoplasmic. Zn(2+)-binding residues include C2011, C2029, C2031, and C2052. The interval 2120–2208 (EFFTEVDGVR…ASSSASQLSA (89 aa)) is FKBP8-binding. The tract at residues 2120 to 2332 (EFFTEVDGVR…PIPPPRRKRT (213 aa)) is transcriptional activation. An interaction with non-structural protein 4A region spans residues 2135–2139 (PACKP). The tract at residues 2189 to 2441 (RLARGSPPSL…PCAAEESKLP (253 aa)) is interaction with host SKP2. S2194 is subject to Phosphoserine; by host; in p56. Phosphoserine; by host; in p58 occurs at positions 2197, 2201, 2204, 2207, and 2210. Residues 2210-2249 (SLKAACTTRHTPPDADLIEANLLWRQEMGGNITRVESENK) form an ISDR region. The segment at 2210 to 2275 (SLKAACTTRH…REVSVPAEIL (66 aa)) is interaction with EIF2AK2/PKR. The interval 2249-2306 (KVVILDSFDPLRAEEDEREVSVPAEILRKSRKFPPALPVWARPDYNPPLLEPWKDPDY) is NS4B-binding. The short motif at 2322-2325 (PPIP) is the SH3-binding element. A Nuclear localization signal motif is present at residues 2326–2334 (PPRRKRTVV). Residue K2350 forms a Glycyl lysine isopeptide (Lys-Gly) (interchain with G-Cter in ubiquitin) linkage. Residues 2351–2367 (TFGSSESSAAGSGTATA) show a composition bias toward low complexity. Residues 2351 to 2409 (TFGSSESSAAGSGTATAPPDQPSDDGDAGSDVESCSSMPPLEGEPGDPDLSDGSWSTVS) are disordered. Residues 2354 to 2377 (SSESSAAGSGTATAPPDQPSDDGD) form a V3 region. A phosphoserine; by host mark is found at S2448 and S2461. Residues 2633–2751 (PMGFSYDTRC…ICESAGTQED (119 aa)) form the RdRp catalytic domain. Mg(2+) contacts are provided by D2639, D2737, and D2738. The helical transmembrane segment at 2990–3010 (WFMLCLLLLSVGVGIYLLPNR) threads the bilayer.

The protein belongs to the hepacivirus polyprotein family. As to quaternary structure, homooligomer. Interacts with E1 (via C-terminus). Interacts with the non-structural protein 5A. Interacts (via N-terminus) with host STAT1 (via SH2 domain); this interaction results in decreased STAT1 phosphorylation and ubiquitin-mediated proteasome-dependent STAT1 degradation, leading to decreased IFN-stimulated gene transcription. Interacts with host STAT3; this interaction constitutively activates STAT3. Interacts with host LTBR receptor. Interacts with host TNFRSF1A receptor and possibly induces apoptosis. Interacts with host HNRPK. Interacts with host YWHAE. Interacts with host UBE3A/E6AP. Interacts with host DDX3X. Interacts with host APOA2. Interacts with host RXRA protein. Interacts with host SP110 isoform 3/Sp110b; this interaction sequesters the transcriptional corepressor SP110 away from the nucleus. Interacts with host CREB3 nuclear transcription protein; this interaction triggers cell transformation. Interacts with host ACY3. Interacts with host C1QR1. Interacts with host RBM24; this interaction, which enhances the interaction of the mature core protein with 5'-UTR, may inhibit viral translation and favor replication. Interacts with host EIF2AK2/PKR; this interaction induces the autophosphorylation of EIF2AK2. Part of the viral assembly initiation complex composed of NS2, E1, E2, NS3, NS4A, NS5A and the mature core protein. Forms a heterodimer with envelope glycoprotein E2. Interacts with mature core protein. Interacts with protease NS2. The heterodimer E1/E2 interacts with host CLDN1; this interaction plays a role in viral entry into host cell. Interacts with host SPSB2 (via C-terminus). Part of the viral assembly initiation complex composed of NS2, E1, E2, NS3, NS4A, NS5A and the mature core protein. Interacts with host NEURL3; this interaction prevents E1 binding to glycoprotein E2. In terms of assembly, forms a heterodimer with envelope glycoprotein E1. Interacts with host CD81 and SCARB1 receptors; these interactions play a role in viral entry into host cell. Interacts with host EIF2AK2/PKR; this interaction inhibits EIF2AK2 and probably allows the virus to evade the innate immune response. Interacts with host CD209/DC-SIGN and CLEC4M/DC-SIGNR. Interact with host SPCS1; this interaction is essential for viral particle assembly. Interacts with protease NS2. The heterodimer E1/E2 interacts with host CLDN1; this interaction plays a role in viral entry into host cell. Part of the viral assembly initiation complex composed of NS2, E1, E2, NS3, NS4A, NS5A and the mature core protein. Interacts with host SLC3A2/4F2hc; the interaction may facilitate viral entry into host cell. Interacts with human PLSCR1. As to quaternary structure, homohexamer. Homoheptamer. Interacts with protease NS2. Homodimer. Interacts with host SPCS1; this interaction is essential for viral particle assembly. Interacts with envelope glycoprotein E1. Interacts with envelope glycoprotein E2. Interacts with viroporin p7. Interacts with serine protease/helicase NS3. Part of the replication complex composed of NS2, NS3, NS4A, NS4B, NS5A and the RNA-directed RNA polymerase embedded in an ER-derived membranous web. Part of the viral assembly initiation complex composed of NS2, E1, E2, NS3, NS4A, NS5A and the mature core protein. In terms of assembly, interacts with protease NS2. Interacts with non-structural protein 4A; this interaction stabilizes the folding of NS3 serine protease. NS3-NS4A interaction is essential for NS3 activation and allows membrane anchorage of the latter. NS3/NS4A complex also prevents phosphorylation of host IRF3, thus preventing the establishment of dsRNA induced antiviral state. Interacts with host MAVS; this interaction leads to the cleavage and inhibition of host MAVS. Interacts with host TICAM1; this interaction leads to the cleavage and inhibition of host TICAM1. Interacts with host TANK-binding kinase/TBK1; this interaction results in the inhibition of the association between TBK1 and IRF3, which leads to the inhibition of IRF3 activation. Interacts with host RBM24. Part of the replication complex composed of NS2, NS3, NS4A, NS4B, NS5A and the RNA-directed RNA polymerase embedded in an ER-derived membranous web. Part of the viral assembly initiation complex composed of NS2, E1, E2, NS3, NS4A, NS5A and the mature core protein. As to quaternary structure, interacts with NS3 serine protease; this interaction stabilizes the folding of NS3 serine protease. NS3-NS4A interaction is essential for NS3 activation and allows membrane anchorage of the latter. Interacts with non-structural protein 5A (via N-terminus). Part of the replication complex composed of NS2, NS3, NS4A, NS4B, NS5A and the RNA-directed RNA polymerase embedded in an ER-derived membranous web. Part of the viral assembly initiation complex composed of NS2, E1, E2, NS3, NS4A, NS5A and the mature core protein. Homomultimer. Interacts with non-structural protein NS5A. Interacts with host PLA2G4C; this interaction likely initiates the recruitment of replication complexes to lipid droplets. Interacts with host STING; this interaction disrupts the interaction between STING and TBK1 thereby suppressing the interferon signaling. Part of the replication complex composed of NS2, NS3, NS4A, NS4B, NS5A and the RNA-directed RNA polymerase embedded in an ER-derived membranous web. In terms of assembly, monomer. Homodimer; dimerization is required for RNA-binding. Interacts with the mature core protein. Interacts (via N-terminus) with non-structural protein 4A. Interacts with non-structural protein 4B. Interacts (via region D2) with RNA-directed RNA polymerase. Part of the viral assembly initiation complex composed of NS2, E1, E2, NS3, NS4A, NS5A and the mature core protein. Part of the replication complex composed of NS2, NS3, NS4A, NS4B, NS5A and the RNA-directed RNA polymerase embedded in an ER-derived membranous web. Interacts with host GRB2. Interacts with host BIN1. Interacts with host PIK3R1. Interacts with host SRCAP. Interacts with host FKBP8. Interacts (via C-terminus) with host VAPB (via MSP domain). Interacts with host EIF2AK2/PKR; this interaction leads to disruption of EIF2AK2 dimerization by NS5A and probably allows the virus to evade the innate immune response. Interacts (via N-terminus) with host PACSIN2 (via N-terminus); this interaction attenuates protein kinase C alpha-mediated phosphorylation of PACSIN2 by disrupting the interaction between PACSIN2 and PRKCA. Interacts (via N-terminus) with host SRC kinase (via SH2 domain). Interacts with most Src-family kinases. Interacts with host IFI27 and SKP2; promotes the ubiquitin-mediated proteasomal degradation of NS5A. Interacts with host GPS2. Interacts with host TNFRSF21; this interaction allows the modulation by the virus of JNK, p38 MAPK, STAT3, and Akt signaling pathways in a DR6-dependent manner. Interacts (via N-terminus) with host CIDEB (via N-terminus); this interaction seems to regulate the association of HCV particles with APOE. Interacts with host CHKA/Choline Kinase-alpha; CHKA bridges host PI4KA and NS5A and potentiates NS5A-stimulated PI4KA activity, which then facilitates the targeting of the ternary complex to the ER for viral replication. Interacts with host SPSB2 (via C-terminus); this interaction targets NS5A for ubiquitination and degradation. Interacts with host RAB18; this interaction may promote the association of NS5A and other replicase components with lipid droplets. Interacts (via region D2) with host PPIA/CYPA; the interaction stimulates RNA-binding ability of NS5A and is dependent on the peptidyl-prolyl cis-trans isomerase activity of PPIA/CYPA. Interacts with host TRIM14; this interaction induces the degradation of NS5A. As to quaternary structure, homooligomer. Interacts with non-structural protein 5A. Interacts with host VAPB. Interacts with host PRK2/PKN2. Interacts with host HNRNPA1 and SEPT6; these interactions facilitate viral replication. Part of the replication complex composed of NS2, NS3, NS4A, NS4B, NS5A and the RNA-directed RNA polymerase. Requires Zn(2+) as cofactor. The cofactor is Mg(2+). In terms of processing, specific enzymatic cleavages in vivo yield mature proteins. The structural proteins, core, E1, E2 and p7 are produced by proteolytic processing by host signal peptidases. The core protein precursor is synthesized as a 23 kDa, which is retained in the ER membrane through the hydrophobic signal peptide. Cleavage by the signal peptidase releases the 21 kDa mature core protein. The cleavage of the core protein precursor occurs between aminoacids 176 and 188 but the exact cleavage site is not known. Some degraded forms of the core protein appear as well during the course of infection. The other proteins (p7, NS2, NS3, NS4A, NS4B, NS5A and NS5B) are cleaved by the viral proteases. Autoprocessing between NS2 and NS3 is mediated by the NS2 cysteine protease catalytic domain and regulated by the NS3 N-terminal domain. Post-translationally, phosphorylated by host PKC and PKA. Ubiquitinated; mediated by UBE3A and leading to core protein subsequent proteasomal degradation. In terms of processing, highly N-glycosylated. Post-translationally, palmitoylation is required for NS2/3 autoprocessing and E2 recruitment to membranes. Palmitoylated. This modification may play a role in its polymerization or in protein-protein interactions. In terms of processing, phosphorylated on serines in a basal form termed p56. p58 is a hyperphosphorylated form of p56. p56 and p58 coexist in the cell in roughly equivalent amounts. Hyperphosphorylation is dependent on the presence of NS4A. Host CSNK1A1/CKI-alpha or RPS6KB1 kinases may be responsible for NS5A phosphorylation. Post-translationally, tyrosine phosphorylation is essential for the interaction with host SRC. The N-terminus is phosphorylated by host PRK2/PKN2. In terms of processing, ubiquitinated. Ubiquitination, most probably at Lys-2350, mediated by host IFI27 and SKP2 leads to proteasomal degradation, restricting viral infection. Ubiquitination by host TRIM22 leads to interruption of viral replication.

The protein resides in the host endoplasmic reticulum membrane. It is found in the host mitochondrion membrane. It localises to the virion. Its subcellular location is the host cytoplasm. The protein localises to the host nucleus. The protein resides in the host lipid droplet. It is found in the virion membrane. It localises to the host mitochondrion. Its subcellular location is the host cell membrane. The protein localises to the host perinuclear region. The enzyme catalyses Hydrolysis of four peptide bonds in the viral precursor polyprotein, commonly with Asp or Glu in the P6 position, Cys or Thr in P1 and Ser or Ala in P1'.. The catalysed reaction is a ribonucleoside 5'-triphosphate + H2O = a ribonucleoside 5'-diphosphate + phosphate + H(+). It catalyses the reaction ATP + H2O = ADP + phosphate + H(+). It carries out the reaction RNA(n) + a ribonucleoside 5'-triphosphate = RNA(n+1) + diphosphate. With respect to regulation, inhibited by the antiviral drug hexamethylene amiloride. Inhibition by amantadine appears to be genotype-dependent. Also inhibited by long-alkyl-chain iminosugar derivatives. Activity is up-regulated by PRK2/PKN2-mediated phosphorylation. Functionally, packages viral RNA to form a viral nucleocapsid, and promotes virion budding. Participates in the viral particle production as a result of its interaction with the non-structural protein 5A. Binds RNA and may function as a RNA chaperone to induce the RNA structural rearrangements taking place during virus replication. Modulates viral translation initiation by interacting with viral IRES and 40S ribosomal subunit. Affects various cell signaling pathways, host immunity and lipid metabolism. Prevents the establishment of cellular antiviral state by blocking the interferon-alpha/beta (IFN-alpha/beta) and IFN-gamma signaling pathways and by blocking the formation of phosphorylated STAT1 and promoting ubiquitin-mediated proteasome-dependent degradation of STAT1. Activates STAT3 leading to cellular transformation. Regulates the activity of cellular genes, including c-myc and c-fos. May repress the promoter of p53, and sequester CREB3 and SP110 isoform 3/Sp110b in the cytoplasm. Represses cell cycle negative regulating factor CDKN1A, thereby interrupting an important check point of normal cell cycle regulation. Targets transcription factors involved in the regulation of inflammatory responses and in the immune response: suppresses TNF-induced NF-kappa-B activation, and activates AP-1. Binds to dendritic cells (DCs) via C1QR1, resulting in down-regulation of T-lymphocytes proliferation. Alters lipid metabolism by interacting with hepatocellular proteins involved in lipid accumulation and storage. Induces up-regulation of FAS promoter activity, and thereby contributes to the increased triglyceride accumulation in hepatocytes (steatosis). In terms of biological role, forms a heterodimer with envelope glycoprotein E2, which mediates virus attachment to the host cell, virion internalization through clathrin-dependent endocytosis and fusion with host membrane. Fusion with the host cell is most likely mediated by both E1 and E2, through conformational rearrangements of the heterodimer required for fusion rather than a classical class II fusion mechanism. E1/E2 heterodimer binds host apolipoproteins such as APOB and ApoE thereby forming a lipo-viro-particle (LVP). APOE associated to the LVP allows the initial virus attachment to cell surface receptors such as the heparan sulfate proteoglycans (HSPGs), syndecan-1 (SDC1), syndecan-1 (SDC2), the low-density lipoprotein receptor (LDLR) and scavenger receptor class B type I (SCARB1). The cholesterol transfer activity of SCARB1 allows E2 exposure and binding of E2 to SCARB1 and the tetraspanin CD81. E1/E2 heterodimer binding on CD81 activates the epithelial growth factor receptor (EGFR) signaling pathway. Diffusion of the complex E1-E2-EGFR-SCARB1-CD81 to the cell lateral membrane allows further interaction with Claudin 1 (CLDN1) and occludin (OCLN) to finally trigger HCV entry. Forms a heterodimer with envelope glycoprotein E1, which mediates virus attachment to the host cell, virion internalization through clathrin-dependent endocytosis and fusion with host membrane. Fusion with the host cell is most likely mediated by both E1 and E2, through conformational rearrangements of the heterodimer required for fusion rather than a classical class II fusion mechanism. The interaction between envelope glycoprotein E2 and host apolipoprotein E/APOE allows the proper assembly, maturation and infectivity of the viral particles. This interaction is probably promoted via the up-regulation of cellular autophagy by the virus. E1/E2 heterodimer binds host apolipoproteins such as APOB and APOE thereby forming a lipo-viro-particle (LVP). APOE associated to the LVP allows the initial virus attachment to cell surface receptors such as the heparan sulfate proteoglycans (HSPGs), syndecan-1 (SDC1), syndecan-1 (SDC2), the low-density lipoprotein receptor (LDLR) and scavenger receptor class B type I (SCARB1). The cholesterol transfer activity of SCARB1 allows E2 exposure and binding of E2 to SCARB1 and the tetraspanin CD81. E1/E2 heterodimer binding on CD81 activates the epithelial growth factor receptor (EGFR) signaling pathway. Diffusion of the complex E1-E2-EGFR-SCARB1-CD81 to the cell lateral membrane allows further interaction with Claudin 1 (CLDN1) and occludin (OCLN) to finally trigger HCV entry. Inhibits host EIF2AK2/PKR activation, preventing the establishment of an antiviral state. Viral ligand for CD209/DC-SIGN and CLEC4M/DC-SIGNR, which are respectively found on dendritic cells (DCs), and on liver sinusoidal endothelial cells and macrophage-like cells of lymph node sinuses. These interactions allow the capture of circulating HCV particles by these cells and subsequent facilitated transmission to permissive cells such as hepatocytes and lymphocyte subpopulations. The interaction between E2 and host amino acid transporter complex formed by SLC3A2 and SLC7A5/LAT1 may facilitate viral entry into host cell. Its function is as follows. Ion channel protein that acts as a viroporin and plays an essential role in the assembly, envelopment and secretion of viral particles. Regulates the host cell secretory pathway, which induces the intracellular retention of viral glycoproteins and favors assembly of viral particles. Creates a pore in acidic organelles and releases Ca(2+) and H(+) in the cytoplasm of infected cells, leading to a productive viral infection. High levels of cytoplasmic Ca(2+) may trigger membrane trafficking and transport of viral ER-associated proteins to viroplasms, sites of viral genome replication. This ionic imbalance induces the assembly of the inflammasome complex, which triggers the maturation of pro-IL-1beta into IL-1beta through the action of caspase-1. Targets also host mitochondria and induces mitochondrial depolarization. In addition of its role as a viroporin, acts as a lipid raft adhesion factor. Functionally, cysteine protease required for the proteolytic auto-cleavage between the non-structural proteins NS2 and NS3. The N-terminus of NS3 is required for the function of NS2 protease (active region NS2-3). Promotes the initiation of viral particle assembly by mediating the interaction between structural and non-structural proteins. In terms of biological role, displays three enzymatic activities: serine protease with a chymotrypsin-like fold, NTPase and RNA helicase. NS3 serine protease, in association with NS4A, is responsible for the cleavages of NS3-NS4A, NS4A-NS4B, NS4B-NS5A and NS5A-NS5B. The NS3/NS4A complex prevents phosphorylation of host IRF3, thus preventing the establishment of dsRNA induced antiviral state. The NS3/NS4A complex induces host amino acid transporter component SLC3A2, thus contributing to HCV propagation. NS3 RNA helicase binds to RNA and unwinds both dsDNA and dsRNA in the 3' to 5' direction, and likely resolves RNA complicated stable secondary structures in the template strand. Binds a single ATP and catalyzes the unzipping of a single base pair of dsRNA. Inhibits host antiviral proteins TBK1 and IRF3 thereby preventing the establishment of an antiviral state. Cleaves host MAVS/CARDIF thereby preventing the establishment of an antiviral state. Cleaves host TICAM1/TRIF, thereby disrupting TLR3 signaling and preventing the establishment of an antiviral state. Peptide cofactor which forms a non-covalent complex with the N-terminal of NS3 serine protease. The NS3/NS4A complex prevents phosphorylation of host IRF3, thus preventing the establishment of dsRNA induced antiviral state. The NS3/NS4A complex induces host amino acid transporter component SLC3A2, thus contributing to HCV propagation. Its function is as follows. Induces a specific membrane alteration that serves as a scaffold for the virus replication complex. This membrane alteration gives rise to the so-called ER-derived membranous web that contains the replication complex. NS4B self-interaction contributes to its function in membranous web formation. Promotes host TRIF protein degradation in a CASP8-dependent manner thereby inhibiting host TLR3-mediated interferon signaling. Disrupts the interaction between STING and TBK1 contributing to the inhibition of interferon signaling. Functionally, phosphorylated protein that is indispensable for viral replication and assembly. Both hypo- and hyperphosphorylated states are required for the viral life cycle. The hyperphosphorylated form of NS5A is an inhibitor of viral replication. Involved in RNA-binding and especially in binding to the viral genome. Zinc is essential for RNA-binding. Participates in the viral particle production as a result of its interaction with the mature viral core protein. Its interaction with host VAPB may target the viral replication complex to vesicles. Down-regulates viral IRES translation initiation. Mediates interferon resistance, presumably by interacting with and inhibiting host EIF2AK2/PKR. Prevents BIN1-induced apoptosis. Acts as a transcriptional activator of some host genes important for viral replication when localized in the nucleus. Via the interaction with host PACSIN2, modulates lipid droplet formation in order to promote virion assembly. Modulates TNFRSF21/DR6 signaling pathway for viral propagation. In terms of biological role, RNA-dependent RNA polymerase that performs primer-template recognition and RNA synthesis during viral replication. Initiates RNA transcription/replication at a flavin adenine dinucleotide (FAD), resulting in a 5'- FAD cap on viral RNAs. In this way, recognition of viral 5' RNA by host pattern recognition receptors can be bypassed, thereby evading activation of antiviral pathways. In Hepatitis C virus genotype 1b (isolate Taiwan) (HCV), this protein is Genome polyprotein.